A 547-amino-acid polypeptide reads, in one-letter code: Delta-guaiene synthase 2 (547 aa).

D299, D303, and D444 together coordinate Mg(2+). A DDXXD motif motif is present at residues 299-303 (DDTYD).

Belongs to the terpene synthase family. Mg(2+) serves as cofactor.

It catalyses the reaction (2E,6E)-farnesyl diphosphate = delta-guaiene + diphosphate. The catalysed reaction is (2E,6E)-farnesyl diphosphate = alpha-guaiene + diphosphate. Its pathway is secondary metabolite biosynthesis; terpenoid biosynthesis. Functionally, sesquiterpene synthase involved in the biosynthesis of delta-guaiene (53.7%) and alpha-guaiene (44.6%), two structures composed of five- and seven-membered rings. Also produces 1.7% of alpha-humulene. This is Delta-guaiene synthase 2 (C3) from Aquilaria crassna (Eagle wood).